Here is a 331-residue protein sequence, read N- to C-terminus: Probable deacetylase MTH_1194 (331 aa).

H118 functions as the Proton donor/acceptor in the catalytic mechanism. The Zn(2+) site is built by D155, H157, and D244.

It belongs to the histone deacetylase family. Zn(2+) is required as a cofactor.

Its function is as follows. Probable deacetylase. This is Probable deacetylase MTH_1194 from Methanothermobacter thermautotrophicus (strain ATCC 29096 / DSM 1053 / JCM 10044 / NBRC 100330 / Delta H) (Methanobacterium thermoautotrophicum).